Consider the following 262-residue polypeptide: 3-methyl-2-oxobutanoate hydroxymethyltransferase (262 aa).

Mg(2+) contacts are provided by aspartate 44 and aspartate 83. Residues 44 to 45 (DS), aspartate 83, and lysine 112 contribute to the 3-methyl-2-oxobutanoate site. Glutamate 114 is a Mg(2+) binding site. Glutamate 177 (proton acceptor) is an active-site residue.

Belongs to the PanB family. Homodecamer; pentamer of dimers. Mg(2+) serves as cofactor.

The protein localises to the cytoplasm. The enzyme catalyses 3-methyl-2-oxobutanoate + (6R)-5,10-methylene-5,6,7,8-tetrahydrofolate + H2O = 2-dehydropantoate + (6S)-5,6,7,8-tetrahydrofolate. It functions in the pathway cofactor biosynthesis; coenzyme A biosynthesis. Functionally, catalyzes the reversible reaction in which hydroxymethyl group from 5,10-methylenetetrahydrofolate is transferred onto alpha-ketoisovalerate to form ketopantoate. This is 3-methyl-2-oxobutanoate hydroxymethyltransferase from Metallosphaera sedula (strain ATCC 51363 / DSM 5348 / JCM 9185 / NBRC 15509 / TH2).